The following is a 695-amino-acid chain: Sodium-dependent phosphate transport protein 2B (695 aa).

Residues 1-44 (MAPWPELENAHPNPNKFIEGASGPQSSIPDKDKGTSKTNDSGTP) are disordered. The Cytoplasmic portion of the chain corresponds to 1-90 (MAPWPELENA…KWSERDSKGK (90 aa)). Residues 91–111 (ILCIFQGIGKFILLLGFLYLF) traverse the membrane as a helical segment. Residues 112 to 136 (VCSLDVLSSAFQLVGGKMAGQFFSN) lie on the Extracellular side of the membrane. A helical membrane pass occupies residues 137–157 (NSIMSNPVAGLVIGVLVTVMV). Over 158–213 (QSSSTSSSIIVSMVASSLLSVRAAIPIIMGANIGTSITNTIVALMQAGDRNEFRRA) the chain is Cytoplasmic. The helical transmembrane segment at 214–234 (FAGATVHDFFNWLSVLVLLPL) threads the bilayer. Residues 235–363 (EAATHYLEKL…FVNFSLPDLA (129 aa)) are Extracellular-facing. Asparagine 295, asparagine 313, asparagine 321, asparagine 340, and asparagine 356 each carry an N-linked (GlcNAc...) asparagine glycan. A disulfide bridge connects residues cysteine 303 and cysteine 350. A helical membrane pass occupies residues 364 to 384 (VGIILLTVSLLILCGCLIMIV). Topologically, residues 385 to 408 (KLLGSVLRGQVATVIKKTLNTDFP) are cytoplasmic. A helical transmembrane segment spans residues 409 to 429 (FPFAWLTGYLAILVGAGMTFI). At 430 to 486 (VQSSSVFTSAMTPLIGIGVISIERAYPLTLGSNIGTTTTAILAALASPGNTLRSSLQ) the chain is on the extracellular side. The chain crosses the membrane as a helical span at residues 487-507 (IALCHFFFNISGILLWYPIPF). The Cytoplasmic segment spans residues 508–526 (TRLPIRLAKGLGNISAKYR). The helical transmembrane segment at 527–547 (WFAVFYLIFFFLLTPLTVFGL) threads the bilayer. The Extracellular segment spans residues 548–551 (SLAG). Residues 552–572 (WPVLVGVGVPIILLILLVLCL) form a helical membrane-spanning segment. Over 573–695 (RMLQARCPRI…MKALSNTTVF (123 aa)) the chain is Cytoplasmic.

It belongs to the SLC34A transporter family. Highly expressed in the lung, in type II alveolar cells. Moderately expressed in kidney followed by small intestine.

Its subcellular location is the apical cell membrane. It catalyses the reaction 3 Na(+)(out) + phosphate(out) = 3 Na(+)(in) + phosphate(in). In terms of biological role, involved in actively transporting phosphate into cells via Na(+) cotransport. This Rattus norvegicus (Rat) protein is Sodium-dependent phosphate transport protein 2B (Slc34a2).